The primary structure comprises 169 residues: Large ribosomal subunit protein uL10 (169 aa).

The protein belongs to the universal ribosomal protein uL10 family. As to quaternary structure, part of the ribosomal stalk of the 50S ribosomal subunit. The N-terminus interacts with L11 and the large rRNA to form the base of the stalk. The C-terminus forms an elongated spine to which L12 dimers bind in a sequential fashion forming a multimeric L10(L12)X complex.

In terms of biological role, forms part of the ribosomal stalk, playing a central role in the interaction of the ribosome with GTP-bound translation factors. The polypeptide is Large ribosomal subunit protein uL10 (Rickettsia typhi (strain ATCC VR-144 / Wilmington)).